The chain runs to 118 residues: Large ribosomal subunit protein bL20 (118 aa).

This sequence belongs to the bacterial ribosomal protein bL20 family.

Binds directly to 23S ribosomal RNA and is necessary for the in vitro assembly process of the 50S ribosomal subunit. It is not involved in the protein synthesizing functions of that subunit. This Pseudomonas fluorescens (strain ATCC BAA-477 / NRRL B-23932 / Pf-5) protein is Large ribosomal subunit protein bL20.